We begin with the raw amino-acid sequence, 565 residues long: MTTREFDYIICGAGSAGNVLATRLTEDPGVTVLLLEAGGPDYRFDFRTQMPAALAYPLQGRRYNWAYETDPEPHMNHRRMECGRGKGLGGSSLINGMCYIRGNALDYDNWATHKGLEDWAYLDCLPYFRKAETRDVGPNDYHGGDGPVSVTTSKPGVNPLFEAMVEAGVQAGYPRTDDLNGYQQEGFGPMDRTVTPRGRRASTARGYLDQARARPNLEIVTHALADRILFSGKRATGVTFLHGSARVTAHARREVLVCSGAIASPQLLQRSGVGPGEWLRELDIPVVLDLPGVGRNLQDHLEMYIQFECKEPVSLYPALKWWNQPKIGLEWMLNGTGLGASNHFEAGGFIRTRDDDPWPNIQYHFLPVAINYNGSNAIEMHGFQAHVGSMRSPSCGRVKLKSRDPHAHPSILFNYMAEALDWREFRDAIRATREIMRQPALDRFRGRELNPGADLKSDNELDTFVRARAETAFHPSCSCKMGYDDMAVVDNEGRVHGIDGLRVVDASIMPIITTGNLNAPTIMIAEKIADRIRKHKPLERSNAQYYVANGAPARGGKPARAPAVV.

An FAD-binding site is contributed by 7 to 36 (DYIICGAGSAGNVLATRLTEDPGVTVLLLE). H474 serves as the catalytic Proton acceptor.

It belongs to the GMC oxidoreductase family. FAD serves as cofactor.

It catalyses the reaction choline + A = betaine aldehyde + AH2. The catalysed reaction is betaine aldehyde + NAD(+) + H2O = glycine betaine + NADH + 2 H(+). It functions in the pathway amine and polyamine biosynthesis; betaine biosynthesis via choline pathway; betaine aldehyde from choline (cytochrome c reductase route): step 1/1. Functionally, involved in the biosynthesis of the osmoprotectant glycine betaine. Catalyzes the oxidation of choline to betaine aldehyde and betaine aldehyde to glycine betaine at the same rate. This Burkholderia mallei (strain ATCC 23344) protein is Oxygen-dependent choline dehydrogenase.